The sequence spans 930 residues: G patch domain-containing protein 1 (930 aa).

Residues 1-12 show a composition bias toward acidic residues; that stretch reads MAALDSDSDEDL. 2 disordered regions span residues 1 to 41 and 170 to 209; these read MAAL…TVRD and GVGPRVKRKARRQKPDPGVKIYGCALPPGGSEESEDEDDD. Residue Ala2 is modified to N-acetylalanine. Ser6 and Ser8 each carry phosphoserine. One can recognise a G-patch domain in the interval 152-198; the sequence is KLSVGFELLRKMGWKEGQGVGPRVKRKARRQKPDPGVKIYGCALPPG. Lys313 is covalently cross-linked (Glycyl lysine isopeptide (Lys-Gly) (interchain with G-Cter in SUMO2)). At Ser358 the chain carries Phosphoserine. Disordered stretches follow at residues 400 to 420, 465 to 486, 566 to 596, and 654 to 930; these read GKAGQDVGTHSRHQLNASKRG, SLAQSASSSRAQASTPDLGHSS, SSRFTHAKEEEDSDQVEVPRDQENDVSDKQS, and PEPA…LRRQ. The span at 465–478 shows a compositional bias: low complexity; the sequence is SLAQSASSSRAQAS. Composition is skewed to basic and acidic residues over residues 582–593 and 674–695; these read EVPRDQENDVSD and GSDKSRKPSRWDTSKQEKKEDS. At Ser715 the chain carries Phosphoserine. Positions 719–737 are enriched in basic and acidic residues; sequence SKEEQAPEPRPDTTVDKAV. The segment covering 768–777 has biased composition (acidic residues); it reads SEEEQDDSED. Positions 851-886 are enriched in basic residues; it reads KPKKSKERHKSKKEHRRKREKKKKHKKHKHKSKQKN. A compositionally biased stretch (low complexity) spans 894 to 903; the sequence is SSESTDSSDS. Residues 921–930 show a composition bias toward basic residues; the sequence is RLKCLPLRRQ.

This sequence belongs to the GPATCH1 family.

In Mus musculus (Mouse), this protein is G patch domain-containing protein 1 (Gpatch1).